The primary structure comprises 1944 residues: uncharacterized protein (1944 aa).

Residues 908–999 form a disordered region; that stretch reads SQNLNFLKSK…SESEEESSNG (92 aa). Basic and acidic residues-rich tracts occupy residues 916-929 and 939-949; these read SKQE…ESAK and LSEKLNSDNHI. Positions 985–996 are enriched in acidic residues; sequence SDEDTSESEEES. 1293–1300 provides a ligand contact to ATP; it reads GPPGTGKT. Residues 1824 to 1944 are disordered; it reads QEAHKVKKRH…PPKVEHFKRK (121 aa). Composition is skewed to basic and acidic residues over residues 1843–1852 and 1869–1891; these read GTERDEDIPN and KVTK…KIDE. Residues 1912 to 1922 show a composition bias toward basic residues; it reads GHMKKSKKPKS.

This sequence belongs to the DNA2/NAM7 helicase family.

The protein resides in the nucleus. This is an uncharacterized protein from Schizosaccharomyces pombe (strain 972 / ATCC 24843) (Fission yeast).